Here is a 128-residue protein sequence, read N- to C-terminus: Modulator protein MzrA (128 aa).

At 1-11 (MMVMKRPSLRQ) the chain is on the cytoplasmic side. The chain crosses the membrane as a helical span at residues 12–32 (FSWLLGGSLLLGALFWLWLAV). The Periplasmic portion of the chain corresponds to 33–128 (QQQEATLAIR…RLRDAPHRLG (96 aa)).

Belongs to the MzrA family. As to quaternary structure, interacts with EnvZ.

Its subcellular location is the cell inner membrane. Modulates the activity of the EnvZ/OmpR two-component regulatory system, probably by directly modulating EnvZ enzymatic activity and increasing stability of phosphorylated OmpR. The chain is Modulator protein MzrA from Klebsiella pneumoniae subsp. pneumoniae (strain ATCC 700721 / MGH 78578).